A 309-amino-acid chain; its full sequence is L-lactate dehydrogenase (309 aa).

NAD(+) is bound by residues Val-12, Asp-33, Arg-38, Tyr-63, and 77 to 78; that span reads GA. Residues Gln-80, Arg-86, and 118–121 each bind substrate; that span reads NPVD. Residues 116-118 and Ser-141 contribute to the NAD(+) site; that span reads ATN. 146 to 149 serves as a coordination point for substrate; it reads DSAR. Residues Arg-151 and His-166 each coordinate beta-D-fructose 1,6-bisphosphate. His-173 serves as the catalytic Proton acceptor. Tyr-219 carries the post-translational modification Phosphotyrosine. Thr-228 contacts substrate.

Belongs to the LDH/MDH superfamily. LDH family. As to quaternary structure, homotetramer.

It localises to the cytoplasm. It catalyses the reaction (S)-lactate + NAD(+) = pyruvate + NADH + H(+). It participates in fermentation; pyruvate fermentation to lactate; (S)-lactate from pyruvate: step 1/1. Its activity is regulated as follows. Allosterically activated by fructose 1,6-bisphosphate (FBP). Its function is as follows. Catalyzes the conversion of lactate to pyruvate. The sequence is that of L-lactate dehydrogenase from Nitratidesulfovibrio vulgaris (strain ATCC 29579 / DSM 644 / CCUG 34227 / NCIMB 8303 / VKM B-1760 / Hildenborough) (Desulfovibrio vulgaris).